The chain runs to 342 residues: Phenylalanine--tRNA ligase alpha subunit (342 aa).

Residue Glu-257 coordinates Mg(2+).

This sequence belongs to the class-II aminoacyl-tRNA synthetase family. Phe-tRNA synthetase alpha subunit type 1 subfamily. In terms of assembly, tetramer of two alpha and two beta subunits. The cofactor is Mg(2+).

The protein resides in the cytoplasm. The catalysed reaction is tRNA(Phe) + L-phenylalanine + ATP = L-phenylalanyl-tRNA(Phe) + AMP + diphosphate + H(+). The chain is Phenylalanine--tRNA ligase alpha subunit from Chlamydia trachomatis serovar A (strain ATCC VR-571B / DSM 19440 / HAR-13).